The sequence spans 883 residues: Lysine-specific demethylase JMJ29 (883 aa).

2 disordered regions span residues 30–62 (KPFM…SAVK) and 161–204 (RTHS…SRKQ). Positions 34–43 (SKGSSPSSSS) are enriched in low complexity. Polar residues-rich tracts occupy residues 161-172 (RTHSLSANSPEN) and 184-204 (SPAS…SRKQ). Positions 209, 212, 223, 226, 232, 235, 252, 255, 338, 341, 363, and 381 each coordinate Zn(2+). The segment at 209-256 (CHQCLKGERITLLICSECEKTMFCLQCIRKWYPNLSEDDVVEKCPLCR) adopts an RING-type; degenerate zinc-finger fold. The B box-type; atypical zinc-finger motif lies at 333 to 392 (DERVYCDHCATSIVDLHRSCPKCSYELCLKCCQEIREGSLSERPEMKFHYVDRGHRYMHG). Residues 632–863 (PRTGILNIAT…ECLRLTEEFR (232 aa)) enclose the JmjC domain. Fe cation-binding residues include histidine 676 and aspartate 678. Residues 713–743 (NKVDKQSTEDCNEKEEEEEEELNMPEISSNE) are disordered. The span at 722 to 735 (DCNEKEEEEEEELN) shows a compositional bias: acidic residues. Residues 755-762 (FRREDVPK) carry the Nuclear localization signal motif. Histidine 831 provides a ligand contact to Fe cation.

This sequence belongs to the JARID1 histone demethylase family. The cofactor is Fe(2+). Expressed in inflorescences, roots, siliques, leaves and stems.

It localises to the nucleus. May function as histone H3 lysine demethylase and be involved in regulation of gene expression. This chain is Lysine-specific demethylase JMJ29, found in Arabidopsis thaliana (Mouse-ear cress).